Reading from the N-terminus, the 787-residue chain is Integrin beta-3 (787 aa).

An N-terminal signal peptide occupies residues Met-1–Gly-25. The Extracellular segment spans residues Glu-26–Asp-717. The region spanning Ile-29–Ala-75 is the PSI domain. 19 cysteine pairs are disulfide-bonded: Cys-30–Cys-48, Cys-38–Cys-460, Cys-41–Cys-63, Cys-51–Cys-74, Cys-202–Cys-209, Cys-257–Cys-298, Cys-399–Cys-411, Cys-431–Cys-458, Cys-462–Cys-482, Cys-473–Cys-485, Cys-487–Cys-496, Cys-498–Cys-528, Cys-511–Cys-526, Cys-520–Cys-531, Cys-533–Cys-546, Cys-548–Cys-569, Cys-553–Cys-567, Cys-561–Cys-572, and Cys-574–Cys-583. The VWFA domain maps to Asp-134–Ile-376. Mg(2+) contacts are provided by Ser-146 and Ser-148. Residues Ser-148, Asp-151, Asp-152, and Asp-183 each contribute to the Ca(2+) site. A CX3CL1-binding region spans residues Cys-202–Cys-209. The segment at Cys-202–Cys-209 is involved in CX3CL1-, NRG1-, FGF1- and IGF1-binding. Ca(2+)-binding residues include Asn-240, Asp-242, Pro-244, Glu-245, and Asp-276. Position 245 (Glu-245) interacts with Mg(2+). The interval Leu-292–Met-312 is CX3CL1-binding. N-linked (GlcNAc...) asparagine glycans are attached at residues Asn-345 and Asn-396. I-EGF domains lie at Cys-462–Glu-497, Cys-498–Glu-547, Cys-548–Asn-584, and Cys-585–Glu-624. N-linked (GlcNAc...) asparagine glycosylation occurs at Asn-477. An N-linked (GlcNAc...) asparagine glycan is attached at Asn-584. Cystine bridges form between Cys-585/Cys-608, Cys-592/Cys-606, Cys-600/Cys-611, Cys-613/Cys-623, Cys-626/Cys-629, Cys-633/Cys-680, Cys-639/Cys-660, Cys-642/Cys-656, and Cys-688/Cys-712. N-linked (GlcNAc...) asparagine glycosylation occurs at Asn-679. The helical transmembrane segment at Ile-718–Trp-740 threads the bilayer. Topologically, residues Lys-741–Thr-787 are cytoplasmic. Phosphothreonine is present on Thr-766. At Tyr-772 the chain carries Phosphotyrosine. The LIR motif lies at Thr-776 to Ile-782. Thr-778 carries the phosphothreonine modification. Residue Tyr-784 is modified to Phosphotyrosine.

This sequence belongs to the integrin beta chain family. In terms of assembly, heterodimer of an alpha and a beta subunit. Beta-3 (ITGB3) associates with either alpha-IIB (ITGA2B) or alpha-V (ITGAV). Interacts with FLNB and COMP. Interacts with PDIA6 following platelet stimulation. Interacts with SYK; upon activation by ITGB3 promotes platelet adhesion. Interacts with MYO10. Interacts with DAB2. Interacts with FERMT2. Integrin ITGAV:ITGB3 interacts with FBLN5 (via N-terminus). Interacts with EMP2; regulates the levels of the heterodimer ITGA5:ITGB3 integrin expression on the plasma membrane. ITGAV:ITGB3 interacts with CCN3. ITGAV:ITGB3 and ITGA2B:ITGB3 interact with SELP (via C-type lectin domain); the interaction mediates cell-cell interaction and adhesion. ITGAV:ITGB3 interacts with AGRA2. ITGAV:ITGB3 is found in a ternary complex with CX3CR1 and CX3CL1. ITGAV:ITGB3 is found in a ternary complex with NRG1 and ERBB3. ITGAV:ITGB3 is found in a ternary complex with FGF1 and FGFR1. ITGAV:ITGB3 interacts with FGF2; it is likely that FGF2 can simultaneously bind ITGAV:ITGB3 and FGF receptors. ITGAV:ITGB3 binds to IL1B. ITGAV:ITGB3 is found in a ternary complex with IGF1 and IGF1R. ITGAV:ITGB3 interacts with IGF2. ITGAV:ITGB3 interacts with FBN1. ITGAV:ITGB3 interacts with CD9, CD81 and CD151 (via second extracellular domain). Interacts (via the allosteric site (site 2)) with CXCL12 in a CXCR4-independent manner. Interacts with MXRA8/DICAM; the interaction inhibits ITGAV:ITGB3 heterodimer formation. ITGAV:ITGB3 interacts with PTN. Forms a complex with PTPRZ1 and PTN that stimulates endothelial cell migration through ITGB3 Tyr-772 phosphorylation. ITGAV:ITGB3 interacts with SLC6A4. Interacts with SLC6A4 (via C-terminus); this interaction regulates SLC6A4 trafficking. ITGA2B:ITGB3 interacts with PPIA/CYPA; the interaction is ROS and PPIase activity-dependent and is increased in the presence of thrombin. Interacts with tensin TNS3; TNS3 also interacts with PEAK1, thus acting as an adapter molecule to bridge the association of PEAK1 with ITGB3. Interacts with TM4SF19. In terms of processing, phosphorylated on tyrosine residues in response to thrombin-induced platelet aggregation. Probably involved in outside-in signaling.

Its subcellular location is the cell membrane. The protein localises to the cell projection. It localises to the lamellipodium membrane. The protein resides in the cell junction. It is found in the focal adhesion. Its subcellular location is the postsynaptic cell membrane. The protein localises to the synapse. In terms of biological role, integrin alpha-V/beta-3 (ITGAV:ITGB3) is a receptor for cytotactin, fibronectin, laminin, matrix metalloproteinase-2, osteopontin, osteomodulin, prothrombin, thrombospondin, vitronectin and von Willebrand factor. Integrin alpha-IIB/beta-3 (ITGA2B:ITGB3) is a receptor for fibronectin, fibrinogen, plasminogen, prothrombin, thrombospondin and vitronectin. Integrins alpha-IIB/beta-3 and alpha-V/beta-3 recognize the sequence R-G-D in a wide array of ligands. Integrin alpha-IIB/beta-3 recognizes the sequence H-H-L-G-G-G-A-K-Q-A-G-D-V in fibrinogen gamma chain. Following activation integrin alpha-IIB/beta-3 brings about platelet/platelet interaction through binding of soluble fibrinogen. This step leads to rapid platelet aggregation which physically plugs ruptured endothelial surfaces. Fibrinogen binding enhances SELP expression in activated platelets. ITGAV:ITGB3 binds to fractalkine (CX3CL1) and acts as its coreceptor in CX3CR1-dependent fractalkine signaling. ITGAV:ITGB3 binds to NRG1 (via EGF domain) and this binding is essential for NRG1-ERBB signaling. ITGAV:ITGB3 binds to FGF1 and this binding is essential for FGF1 signaling. ITGAV:ITGB3 binds to FGF2 and this binding is essential for FGF2 signaling. ITGAV:ITGB3 binds to IGF1 and this binding is essential for IGF1 signaling. ITGAV:ITGB3 binds to IGF2 and this binding is essential for IGF2 signaling. ITGAV:ITGB3 binds to IL1B and this binding is essential for IL1B signaling. ITGAV:ITGB3 binds to PLA2G2A via a site (site 2) which is distinct from the classical ligand-binding site (site 1) and this induces integrin conformational changes and enhanced ligand binding to site 1. ITGAV:ITGB3 acts as a receptor for fibrillin-1 (FBN1) and mediates R-G-D-dependent cell adhesion to FBN1. ITGAV:ITGB3 binds to the Lilrb4a/Gp49b receptor and enhances the Lilrb4a-mediated inhibition of mast cell activation. ITGAV:ITGB3 also suppresses marginal zone B cell antibody production through its interaction with Lilrb4a. In brain, plays a role in synaptic transmission and plasticity. Involved in the regulation of the serotonin neurotransmission, is required to localize to specific compartments within the synapse the serotonin receptor SLC6A4 and for an appropriate reuptake of serotonin. Controls excitatory synaptic strength by regulating GRIA2-containing AMPAR endocytosis, which affects AMPAR abundance and composition. ITGAV:ITGB3 act as a receptor for CD40LG. ITGAV:ITGB3 acts as a receptor for IBSP and promotes cell adhesion and migration to IBSP. In Mus musculus (Mouse), this protein is Integrin beta-3.